Reading from the N-terminus, the 379-residue chain is Heme A synthase (379 aa).

Positions 1 to 28 (MAGSRSIFEEVQDSQKPAAMPGGVSRDR) are disordered. 8 helical membrane-spanning segments follow: residues 35–55 (VRVF…IGGL), 124–144 (FLGV…SVPV), 150–170 (LLLL…MVHS), 183–203 (RLAV…WYIL), 227–247 (ATGL…VAGI), 287–307 (FFHR…WIMA), 318–338 (AFDW…MTVM), and 341–361 (SPWY…TLIL). Residue histidine 289 coordinates heme. Residue histidine 349 coordinates heme.

It belongs to the COX15/CtaA family. Type 2 subfamily. Interacts with CtaB. Requires heme b as cofactor.

It is found in the cell membrane. It catalyses the reaction Fe(II)-heme o + 2 A + H2O = Fe(II)-heme a + 2 AH2. Its pathway is porphyrin-containing compound metabolism; heme A biosynthesis; heme A from heme O: step 1/1. Functionally, catalyzes the conversion of heme O to heme A by two successive hydroxylations of the methyl group at C8. The first hydroxylation forms heme I, the second hydroxylation results in an unstable dihydroxymethyl group, which spontaneously dehydrates, resulting in the formyl group of heme A. The protein is Heme A synthase of Jannaschia sp. (strain CCS1).